We begin with the raw amino-acid sequence, 516 residues long: GMP synthase [glutamine-hydrolyzing] (516 aa).

A Glutamine amidotransferase type-1 domain is found at 8-198; that stretch reads KILILDFGSQ…VVNICGCDTL (191 aa). The active-site Nucleophile is Cys-84. Catalysis depends on residues His-172 and Glu-174. A GMPS ATP-PPase domain is found at 199-391; that stretch reads WNIENIIEND…LGLPYNMLYR (193 aa). 226 to 232 lines the ATP pocket; that stretch reads SGGVDSS.

In terms of assembly, homodimer.

The enzyme catalyses XMP + L-glutamine + ATP + H2O = GMP + L-glutamate + AMP + diphosphate + 2 H(+). The protein operates within purine metabolism; GMP biosynthesis; GMP from XMP (L-Gln route): step 1/1. Its function is as follows. Catalyzes the synthesis of GMP from XMP. This is GMP synthase [glutamine-hydrolyzing] from Francisella tularensis subsp. novicida (strain U112).